The primary structure comprises 526 residues: Probable lipid II flippase MurJ (526 aa).

A run of 14 helical transmembrane segments spans residues 35–55 (LMGTSATADAFTVAFMIPNLF), 58–78 (LFAENAISVAFIPVFTQHYSM), 96–116 (AIFTLMSSVTASISLIGILGA), 137–157 (MFPYLWMISLAAFFQGMLHSI), 160–180 (FVPSGCTPIFFNVSVIFSMYF), 190–210 (IAAAIGVLIGGCAQALFQLIF), 235–255 (IIALLLPTTVGIATYLLNDLV), 281–301 (LLGIFIVSLSSVVLPDLSFHV), 313–333 (LITAIKIVMLITIPATFFVLF), 362–382 (WHSVGMLAIALNRVLISAFYA), 391–411 (IAGTISFVTNIILATLLFIPL), 415–435 (GIAFSLSAASMVQTVFLWMFL), 459–479 (LFSVIALVPTWASSFFTAYFF), and 489–509 (GVPLCVEALIFSCTGCILLLL).

It belongs to the MurJ/MviN family.

The protein resides in the cell inner membrane. The protein operates within cell wall biogenesis; peptidoglycan biosynthesis. Involved in peptidoglycan biosynthesis. Transports lipid-linked peptidoglycan precursors from the inner to the outer leaflet of the cytoplasmic membrane. This Treponema pallidum (strain Nichols) protein is Probable lipid II flippase MurJ.